We begin with the raw amino-acid sequence, 636 residues long: Fructose-1,6-bisphosphatase class 3 (636 aa).

Belongs to the FBPase class 3 family. Requires Mn(2+) as cofactor.

The catalysed reaction is beta-D-fructose 1,6-bisphosphate + H2O = beta-D-fructose 6-phosphate + phosphate. It participates in carbohydrate biosynthesis; gluconeogenesis. This chain is Fructose-1,6-bisphosphatase class 3, found in Streptococcus gordonii (strain Challis / ATCC 35105 / BCRC 15272 / CH1 / DL1 / V288).